Consider the following 232-residue polypeptide: MAKMGKKYSESIKLIDKNSLYTPSEAIDLTLKTAKAKFDETIELSIRLGVDPRHADQQVRGAVVLPHGTGKKVRVLVFAKGDKAKEAEAAGADYVGAEEYLDKIQKENWFDFDVVVATPDMMGVVGRLGRVLGPKGLMPNPKSGTVTFDVAKAIADIKAGKVEYRLDKTAIIHVPIGKKSFGEEKLAENYNVLMEAIVKAKPAAAKGQYIKSLSISSTMGPGVKINPAKVLA.

Belongs to the universal ribosomal protein uL1 family. As to quaternary structure, part of the 50S ribosomal subunit.

Functionally, binds directly to 23S rRNA. The L1 stalk is quite mobile in the ribosome, and is involved in E site tRNA release. Protein L1 is also a translational repressor protein, it controls the translation of the L11 operon by binding to its mRNA. This Clostridium novyi (strain NT) protein is Large ribosomal subunit protein uL1.